The sequence spans 579 residues: Glucans biosynthesis protein G (579 aa).

Residues 1–37 form the signal peptide; the sequence is MIVSPHKASRIPGNRLRKALMASAALVGLMSAGQLWA. The disordered stretch occupies residues 516–579; sequence AKPAEEAKHD…TWSYQLPADE (64 aa). Positions 517–539 are enriched in basic and acidic residues; that stretch reads KPAEEAKHDKTAAKHGKAEKAAK.

This sequence belongs to the OpgD/OpgG family.

The protein resides in the periplasm. It participates in glycan metabolism; osmoregulated periplasmic glucan (OPG) biosynthesis. Involved in the biosynthesis of osmoregulated periplasmic glucans (OPGs). The sequence is that of Glucans biosynthesis protein G from Pseudomonas putida (strain W619).